Reading from the N-terminus, the 528-residue chain is DEAD-box ATP-dependent RNA helicase 6 (528 aa).

Composition is skewed to low complexity over residues 1-15 (MNNN…PPGI) and 65-80 (QQYV…QQQQ). The disordered stretch occupies residues 1–80 (MNNNNNNRGR…GYPQQIQQQQ (80 aa)). The Q motif motif lies at 154–182 (NEFEDYFLKRDLLRGIYEKGFEKPSPIQE). One can recognise a Helicase ATP-binding domain in the interval 185–355 (IPIALTGSDI…DRYLKKPYII (171 aa)). Residue 198 to 205 (AKNGTGKT) coordinates ATP. The residue at position 260 (Thr-260) is a Phosphothreonine. The DEAD box signature appears at 303–306 (DEAD). The Helicase C-terminal domain maps to 365–525 (GVTQYYAFVE…PIPSLIDKAI (161 aa)).

It belongs to the DEAD box helicase family. DDX6/DHH1 subfamily.

The protein localises to the cytoplasm. It localises to the P-body. It carries out the reaction ATP + H2O = ADP + phosphate + H(+). Its function is as follows. ATP-dependent RNA helicase involved in mRNA turnover, and more specifically in mRNA decapping. The protein is DEAD-box ATP-dependent RNA helicase 6 (RH6) of Arabidopsis thaliana (Mouse-ear cress).